The following is a 375-amino-acid chain: MNSKIPEDLMERAYQGKCTKEDALQLLEVPPFELFRFADELRDLAVGDTVTYVVNRNINFTSRCVGTCGFCAFRTNNGKVLSIEEIMEKVRDAEKANATEVCIQGGLLPEVGLDFYQGIAEAIKAEFPEMHIHSFSPMEVYHASRISEIPVKEALRRLKRSGLDTMPGTAAEILSDRVRKIICPSKLKTAEWVEVVRQAHAAGIPTTATMMYGHVETREERIDHMLIIRDIQKETGGITEFVPLPFMPYNNPVGEKMIREGRYATPGLEDLKIYAVSRILFHGHVDNIQASWVKLGKKLAQFSLHCGTNDLGGTLMEESISRSAGACHGEMITVDELEWMIHGAGRIPKERTTLYRRVELASGNLRKISGCGAYE.

The Radical SAM core domain maps to Val50 to His284. Residues Cys64, Cys68, and Cys71 each contribute to the [4Fe-4S] cluster site.

Belongs to the radical SAM superfamily. CofH family. In terms of assembly, consists of two subunits, CofG and CofH. It depends on [4Fe-4S] cluster as a cofactor.

The catalysed reaction is 5-amino-6-(D-ribitylamino)uracil + L-tyrosine + S-adenosyl-L-methionine = 5-amino-5-(4-hydroxybenzyl)-6-(D-ribitylimino)-5,6-dihydrouracil + 2-iminoacetate + 5'-deoxyadenosine + L-methionine + H(+). Its pathway is cofactor biosynthesis; coenzyme F0 biosynthesis. Functionally, catalyzes the radical-mediated synthesis of 5-amino-5-(4-hydroxybenzyl)-6-(D-ribitylimino)-5,6-dihydrouracil from 5-amino-6-(D-ribitylamino)uracil and L-tyrosine. This chain is 5-amino-6-(D-ribitylamino)uracil--L-tyrosine 4-hydroxyphenyl transferase 1, found in Methanosarcina acetivorans (strain ATCC 35395 / DSM 2834 / JCM 12185 / C2A).